The primary structure comprises 260 residues: Thiazole synthase (260 aa).

Lys100 (schiff-base intermediate with DXP) is an active-site residue. 1-deoxy-D-xylulose 5-phosphate is bound by residues Gly162, 188–189 (AG), and 210–211 (NT).

Belongs to the ThiG family. As to quaternary structure, homotetramer. Forms heterodimers with either ThiH or ThiS.

It localises to the cytoplasm. The catalysed reaction is [ThiS sulfur-carrier protein]-C-terminal-Gly-aminoethanethioate + 2-iminoacetate + 1-deoxy-D-xylulose 5-phosphate = [ThiS sulfur-carrier protein]-C-terminal Gly-Gly + 2-[(2R,5Z)-2-carboxy-4-methylthiazol-5(2H)-ylidene]ethyl phosphate + 2 H2O + H(+). Its pathway is cofactor biosynthesis; thiamine diphosphate biosynthesis. Functionally, catalyzes the rearrangement of 1-deoxy-D-xylulose 5-phosphate (DXP) to produce the thiazole phosphate moiety of thiamine. Sulfur is provided by the thiocarboxylate moiety of the carrier protein ThiS. In vitro, sulfur can be provided by H(2)S. This is Thiazole synthase from Wolinella succinogenes (strain ATCC 29543 / DSM 1740 / CCUG 13145 / JCM 31913 / LMG 7466 / NCTC 11488 / FDC 602W) (Vibrio succinogenes).